Consider the following 1958-residue polypeptide: Echinoderm microtubule-associated protein-like 6 (1958 aa).

WD repeat units lie at residues 59–100 (GHND…TVSI), 104–145 (VHTH…LLAS), 148–187 (GHSDRIFDISWDPYQPNRMVSCGVKHIKFWTLCGNALTAK), 195–233 (GDLQTILCLACAKEDITYSGALNGDIYVWKGLTLVRTIQ), 235–273 (AHSAGIFSLYACEEGFATGGRDGCIRLWDTDFKPITKID), 280–321 (GYKG…LILQ), 323–362 (HCEGELWALALHPKKPLAVTGSDDRSVRLWSLADHALIAR), 364–403 (NMEEAVRSVSFSPDGSQLALGMKDGSFIVLRVRDMTEVVH), 406–445 (DRKEVIHEMKFSPDGSYLAVGSNDGPVDVYAVAQRYKKIG), and 561–601 (GHSA…VSNG). Residues 604–627 (ETTPQEGGADSYSEESDSDFSDVP) form a disordered region. Residues 615 to 627 (YSEESDSDFSDVP) show a composition bias toward acidic residues. 10 WD repeats span residues 725–766 (GHDD…CLSL), 770–811 (HHQR…KIAT), 814–853 (GHKDKIFVVKCNPQHADKLVTVGIKHIKFWQQAGGGFTSK), 861–900 (GKLETMMCVSYGRMEDLVFSGAATGDIFIWKDVLLLKTVK), 901–940 (AHDGPVFAMYALDKGFVTGGKDGIVELWDDMFERCLKTYA), 996–1035 (HMEGEVWGLAAHPLLPICATVSDDKTLRIWELSSQHRMLA), 1038–1077 (KLKKGGRCCAFSPDGKALAVGLNDGSFLVVNADTVEDMLS), 1080–1120 (HRKE…RVGI), 1191–1230 (SDVTDVNAANLTKDGSLLATGDDFGFVKLFSYPVKGQHAR), and 1236–1276 (GHSA…TQES). Over residues 1322 to 1337 (KPHQQLKEVSMEERPP) the composition is skewed to basic and acidic residues. A disordered region spans residues 1322-1352 (KPHQQLKEVSMEERPPVSRAAPQPEKLQKNN). 10 WD repeats span residues 1412-1456 (EHTD…TLSM), 1460-1501 (FHTK…KVAS), 1504-1543 (GHLERIFVVEFRPDSDTQFVSVGVKHMKFWTLAGSALLYK), 1553-1591 (AKMQTMLSVAFGANNLTFTGAINGDVYVWKEHFLIRLVA), 1593-1638 (AHTG…CRAF), 1685-1724 (HMEGEIWGLATHPSKDMFISASNDGTARIWDLADKKLLNK), 1726-1767 (NLGH…GKKR), 1768-1807 (DRKSAIQDIRISPDNRFLAVGSSEQTVDFYDLTQGTSLNR), 1880-1919 (ADKADVNCACVTHAGLNIVTGDDFGLLKLFDFPCTEKFAK), and 1925-1958 (GHSAHVTNIRFSSDDKYVVSTGGDDCSVFVWRCL).

This sequence belongs to the WD repeat EMAP family.

It localises to the cytoplasm. The protein localises to the cytoskeleton. May modify the assembly dynamics of microtubules, such that microtubules are slightly longer, but more dynamic. The chain is Echinoderm microtubule-associated protein-like 6 (Eml6) from Mus musculus (Mouse).